The primary structure comprises 592 residues: Hepatocyte nuclear factor 1-alpha-B (592 aa).

The dimerization stretch occupies residues 1–31; the sequence is MASQLSYLQQELLRALLESGVTKEALKKALA. The HNF-p1 domain occupies 1 to 32; that stretch reads MASQLSYLQQELLRALLESGVTKEALKKALAD. Residues 54 to 78 are disordered; that stretch reads NCVQLPNGLGEPQMSEDESSDDGGD. Residues 67-77 are compositionally biased toward acidic residues; sequence MSEDESSDDGG. Residues 85 to 180 enclose the POU-specific atypical domain; it reads KELERLSPEE…IARQFTHAGH (96 aa). Interaction with DNA regions lie at residues 128-130, 141-147, 153-156, 201-204, 261-263, and 268-271; these read QRE, HLSQHLN, KTQK, RFKW, RVY, and NSGK. The Nuclear localization signal signature appears at 195 to 203; the sequence is KKMRRNRFK. Positions 197–277 form a DNA-binding region, homeobox; HNF1-type; sequence MRRNRFKWGP…NSGKEEAFRH (81 aa). 2 stretches are compositionally biased toward polar residues: residues 284-295 and 306-328; these read YNGQQSSAQPLS and RYTQ…TLSP. Disordered stretches follow at residues 284–329 and 511–533; these read YNGQ…LSPS and KQVV…HNQD.

Belongs to the HNF1 homeobox family. Binds DNA as dimer. Forms a homodimer or heterodimer with HNF1-alpha-A. Potentially also form a heterodimer with HNF1-beta. As to expression, liver.

Its subcellular location is the nucleus. In terms of biological role, transcriptional activator that regulates the tissue specific expression of multiple genes, especially in pancreas and liver. Binds to the hepatocyte specific promoter element HP1. Binds to the inverted palindrome 5'-GTTAATNATTAAC-3'. The sequence is that of Hepatocyte nuclear factor 1-alpha-B (hnf1a-b) from Xenopus laevis (African clawed frog).